The chain runs to 222 residues: MTNNQFSEDTKKIADQIKDALMGISDDLVLESKEVEEIFEELSQNEEFEYEMERMLSILNEQTMDLTQLQSRIILLIRKYLGKTKNLKLKMLKMDEKLINKNVAEVSNYLMHQHSKIVRDANKNLTNPKDKLQGLTKQARIDLKRLLKSFAVYQIYMFMNPKRIAGETKLMNFAYNMIKGGMKLAKKYEGGKEQEIKSYSPRLIKKLKKAHVGFKKSGGISI.

A coiled-coil region spans residues 43–73 (SQNEEFEYEMERMLSILNEQTMDLTQLQSRI).

This is an uncharacterized protein from Rickettsia conorii (strain ATCC VR-613 / Malish 7).